A 356-amino-acid polypeptide reads, in one-letter code: Sensor protein BasS (356 aa).

Residues 1–13 (MRFQRRAMTLRQR) lie on the Cytoplasmic side of the membrane. The chain crosses the membrane as a helical span at residues 14-34 (LMLTIGLILLVFQLISTFWLW). Over 35–64 (HESTEQIQLFEQALRDNRNNDRHIMHEIRE) the chain is Periplasmic. Residues 65 to 88 (AVASLIVPGVFMVSLTLLICYQAV) traverse the membrane as a helical segment. The HAMP domain occupies 89–141 (RRITRPLAELQKELEARTADNLAPIAIHSSTLEIESVVSAINQLVTRLTTTLD). Residues 89 to 356 (RRITRPLAEL…TRAWVLLKKA (268 aa)) are Cytoplasmic-facing. Residues 149–356 (DVAHELRTPL…TRAWVLLKKA (208 aa)) form the Histidine kinase domain. H152 is modified (phosphohistidine; by autocatalysis).

Post-translationally, autophosphorylated.

The protein localises to the cell inner membrane. The enzyme catalyses ATP + protein L-histidine = ADP + protein N-phospho-L-histidine.. Its function is as follows. Member of the two-component regulatory system BasS/BasR. Autophosphorylates and activates BasR by phosphorylation. Plays a role in the adaptation of the organism to the host environment, in particular to neutrophils, and therefore it plays a role in virulence as well. This is Sensor protein BasS (basS) from Salmonella typhimurium (strain LT2 / SGSC1412 / ATCC 700720).